A 178-amino-acid polypeptide reads, in one-letter code: ATP-dependent protease subunit HslV (178 aa).

Residue threonine 5 is part of the active site. Residues serine 161, cysteine 164, and threonine 167 each contribute to the Na(+) site.

Belongs to the peptidase T1B family. HslV subfamily. As to quaternary structure, a double ring-shaped homohexamer of HslV is capped on each side by a ring-shaped HslU homohexamer. The assembly of the HslU/HslV complex is dependent on binding of ATP.

It is found in the cytoplasm. The enzyme catalyses ATP-dependent cleavage of peptide bonds with broad specificity.. Allosterically activated by HslU binding. In terms of biological role, protease subunit of a proteasome-like degradation complex believed to be a general protein degrading machinery. This is ATP-dependent protease subunit HslV from Syntrophomonas wolfei subsp. wolfei (strain DSM 2245B / Goettingen).